Here is a 405-residue protein sequence, read N- to C-terminus: Argininosuccinate synthase (405 aa).

ATP contacts are provided by residues 11–19 (AYSGGLDTS) and Ala38. L-citrulline-binding residues include Tyr91 and Ser96. Position 121 (Gly121) interacts with ATP. L-aspartate contacts are provided by Thr123, Asn127, and Asp128. Asn127 is an L-citrulline binding site. Residues Arg131, Ser182, Ser191, Glu267, and Tyr279 each coordinate L-citrulline.

This sequence belongs to the argininosuccinate synthase family. Type 1 subfamily. Homotetramer.

It localises to the cytoplasm. It carries out the reaction L-citrulline + L-aspartate + ATP = 2-(N(omega)-L-arginino)succinate + AMP + diphosphate + H(+). Its pathway is amino-acid biosynthesis; L-arginine biosynthesis; L-arginine from L-ornithine and carbamoyl phosphate: step 2/3. In Sphingopyxis alaskensis (strain DSM 13593 / LMG 18877 / RB2256) (Sphingomonas alaskensis), this protein is Argininosuccinate synthase.